Here is a 284-residue protein sequence, read N- to C-terminus: Cuticle collagen dpy-5 (284 aa).

The interval 88–284 is disordered; the sequence is GLPSQGCPAG…PCPERKRRRV (197 aa). Triple-helical region stretches follow at residues 94–126 and 143–270; these read CPAGAPGNPGAPGEPGGTGPDGKNGPTGLPGLN and GPPG…VGAD. Positions 106–115 are enriched in gly residues; that stretch reads GEPGGTGPDG. Positions 163 to 177 are enriched in basic and acidic residues; sequence AGKRGTPGKDGEPGR. Low complexity-rich tracts occupy residues 181-193, 224-246, and 255-271; these read IGDQGTPGQDGQP, EPGNNGNPGEEGQTGAQGPTGQP, and DGTPGQAGPQGAVGADA.

It belongs to the cuticular collagen family. Collagen polypeptide chains are complexed within the cuticle by disulfide bonds and other types of covalent cross-links. May be a substrate of bli-4.

In terms of biological role, nematode cuticles are composed largely of collagen-like proteins. The cuticle functions both as an exoskeleton and as a barrier to protect the worm from its environment. In Caenorhabditis elegans, this protein is Cuticle collagen dpy-5 (dpy-5).